Here is a 360-residue protein sequence, read N- to C-terminus: Peptide chain release factor 1 (360 aa).

Residue Q236 is modified to N5-methylglutamine.

It belongs to the prokaryotic/mitochondrial release factor family. In terms of processing, methylated by PrmC. Methylation increases the termination efficiency of RF1.

It is found in the cytoplasm. Functionally, peptide chain release factor 1 directs the termination of translation in response to the peptide chain termination codons UAG and UAA. The chain is Peptide chain release factor 1 from Ligilactobacillus salivarius (strain UCC118) (Lactobacillus salivarius).